The sequence spans 645 residues: 1,4-alpha-glucan branching enzyme GlgB (645 aa).

Aspartate 309 acts as the Nucleophile in catalysis. Glutamate 352 acts as the Proton donor in catalysis. The interval 619–645 (VKTRKGSKKQDGSKTKVRSNVTSRGKR) is disordered. Residues 636–645 (RSNVTSRGKR) are compositionally biased toward polar residues.

The protein belongs to the glycosyl hydrolase 13 family. GlgB subfamily. In terms of assembly, monomer.

It catalyses the reaction Transfers a segment of a (1-&gt;4)-alpha-D-glucan chain to a primary hydroxy group in a similar glucan chain.. It participates in glycan biosynthesis; glycogen biosynthesis. Its function is as follows. Catalyzes the formation of the alpha-1,6-glucosidic linkages in glycogen by scission of a 1,4-alpha-linked oligosaccharide from growing alpha-1,4-glucan chains and the subsequent attachment of the oligosaccharide to the alpha-1,6 position. This Bacillus mycoides (strain KBAB4) (Bacillus weihenstephanensis) protein is 1,4-alpha-glucan branching enzyme GlgB.